The primary structure comprises 453 residues: Alpha-2B adrenergic receptor (453 aa).

Residues 1 to 17 (MSGPTMDHQEPYSVQAT) are Extracellular-facing. Residues 18 to 42 (AAIASAITFLILFTIFGNALVILAV) traverse the membrane as a helical segment. Topologically, residues 43 to 54 (LTSRSLRAPQNL) are cytoplasmic. The helical transmembrane segment at 55-80 (FLVSLAAADILVATLIIPFSLANELL) threads the bilayer. Over 81–90 (GYWYFWRAWC) the chain is Extracellular. Cys-90 and Cys-169 form a disulfide bridge. A helical transmembrane segment spans residues 91–113 (EVYLALDVLFCTSSIVHLCAISL). Residues 114–135 (DRYWAVSRALEYNSKRTPRRIK) lie on the Cytoplasmic side of the membrane. The chain crosses the membrane as a helical span at residues 136-158 (CIILTVWLIAAVISLPPLIYKGD). Over 159-174 (QRPEPRGLPQCELNQE) the chain is Extracellular. Residues 175 to 198 (AWYILASSIGSFFAPCLIMILVYL) form a helical membrane-spanning segment. Residues 199 to 375 (RIYVIAKRSH…LSREKRFTFV (177 aa)) are Cytoplasmic-facing. Positions 213-331 (GAKRGSGEGE…PASVCNPPLQ (119 aa)) are disordered. Residues 287 to 297 (GQGQKKGTSGA) are compositionally biased toward polar residues. The span at 300–314 (EEGDEEDEEEVEECE) shows a compositional bias: acidic residues. The helical transmembrane segment at 376 to 399 (LAVVIGVFVVCWFPFFFSYSLGAI) threads the bilayer. The Extracellular portion of the chain corresponds to 400–408 (CPQHCKVPH). Residues 409 to 432 (GLFQFFFWIGYCNSSLNPVIYTVF) traverse the membrane as a helical segment. Topologically, residues 433–453 (NQDFRRAFRRILCRPWTQTGW) are cytoplasmic. Cys-445 carries the S-palmitoyl cysteine lipid modification.

Belongs to the G-protein coupled receptor 1 family. Adrenergic receptor subfamily. ADRA2B sub-subfamily. In terms of assembly, interacts with RAB26. Interacts with PPP1R9B. Interacts with GGA1, GGA2 and GGA3.

The protein localises to the cell membrane. In terms of biological role, alpha-2 adrenergic receptors mediate the catecholamine-induced inhibition of adenylate cyclase through the action of G proteins. This chain is Alpha-2B adrenergic receptor (Adra2b), found in Rattus norvegicus (Rat).